The primary structure comprises 115 residues: Large ribosomal subunit protein uL22 (115 aa).

Belongs to the universal ribosomal protein uL22 family. Part of the 50S ribosomal subunit.

Its function is as follows. This protein binds specifically to 23S rRNA; its binding is stimulated by other ribosomal proteins, e.g. L4, L17, and L20. It is important during the early stages of 50S assembly. It makes multiple contacts with different domains of the 23S rRNA in the assembled 50S subunit and ribosome. The globular domain of the protein is located near the polypeptide exit tunnel on the outside of the subunit, while an extended beta-hairpin is found that lines the wall of the exit tunnel in the center of the 70S ribosome. This chain is Large ribosomal subunit protein uL22, found in Coxiella burnetii (strain CbuK_Q154) (Coxiella burnetii (strain Q154)).